The following is a 1007-amino-acid chain: MEQAGTRPAATEHPRLRRPMPWLLLLPLLLLLLLLLPGPAASQLRYSVPEEQAPGALVGNVARALGLELRRLGPGCLRINHLGAPSPRYLELDLTSGALFVNERIDREALCEQRPRCLLSLEVLAHNPVAVSAVEVEILDINDNSPRFPRPNYQLQVSESVAPGARFHIESAQDPDVGANSVQTYELSPSEHFELDLKPLQENSKVLELVLRKGLDREQAALHHLVLTAVDGGIPARSGTAQISVRVLDTNDNSPAFDQSTYRVQLREDSPPGTLVVKLNASDPDEGSNGELRYSLSSYTSDRERQLFSIDASTGEVRVIGGLDYEEASSYQIYVQATDRGPVPMAGHCKVLVDIVDVNDNAPEVVLTDLYSPVPENATPNTIVAVLSVNDQDSGPNRKVSLGLEATLPFRLNGFGNSYTLVVSGPLDRERVAVYNITVTATDGGIPQLTSLRTLKVEISDINDNPPSFLEDSYSIYIQENNLPGVLLCTVQATDPDEKENAEVTYSLLEREIQGLPVTSYVSINSASGSLYAVNSFDYEKFREFFVTVEAQDKGSPPLSSTVTANVYVVDMNDHAPHILYPTSTNSSAAFEMVPRTAPAGYLVTKVIAMDSDSGQNAWLFYHLAQTSDLDLFKVELHTGEIRTTRKMGDESGSTFNLTVVVRDNGEPSLSASVAITVAVVDRVSKILPDTQRHVKSPRTYSEITLYLIIALSTVSFIFLLTIIILSIIKCYRYTAYGTACCGGFCGVRERSPAELYKQANNNIDARIPHGLKVQPHFIEVRGNGSLTKTYCYKACLTAGSGSDTFMFYNTGAQTGPGPSGAQAAVTDSRNLTGQSGQNAGNLIILKNEAVSQNEPRQPNPDWRYSASLRAGMHSSVHLEEAGILRAGPGGPDQQWPTVSSATPEPEAGEVSPPVGAGVNSNSWTFKYGPGNPKQSGPGELPDKFIIPGSPAIISIRQEPTNSQIDKSDFITFGKKEETKKKKKKKKGNKTQEKKEKGNSTTDNSDQ.

The N-terminal stretch at 1–42 (MEQAGTRPAATEHPRLRRPMPWLLLLPLLLLLLLLLPGPAAS) is a signal peptide. 5 consecutive Cadherin domains span residues 43–148 (QLRY…SPRF), 149–257 (PRPN…SPAF), 258–365 (DQST…APEV), 374–469 (VPEN…PPSF), and 470–579 (LEDS…APHI). Topologically, residues 43–708 (QLRYSVPEEQ…RTYSEITLYL (666 aa)) are extracellular. Asn280 and Asn436 each carry an N-linked (GlcNAc...) asparagine glycan. N-linked (GlcNAc...) asparagine glycans are attached at residues Asn586 and Asn657. The Cadherin 6 domain maps to 594–691 (VPRTAPAGYL…DRVSKILPDT (98 aa)). A helical membrane pass occupies residues 709-729 (IIALSTVSFIFLLTIIILSII). The Cytoplasmic portion of the chain corresponds to 730-1007 (KCYRYTAYGT…GNSTTDNSDQ (278 aa)). PXXP repeat units lie at residues 856–859 (PRQP), 889–892 (PGGP), 930–933 (PGNP), and 948–951 (PGSP). The segment at 856–951 (PRQPNPDWRY…PDKFIIPGSP (96 aa)) is 4 X 4 AA repeats of P-X-X-P. The segment at 885 to 1007 (LRAGPGGPDQ…GNSTTDNSDQ (123 aa)) is disordered. Residues 966 to 980 (DKSDFITFGKKEETK) are compositionally biased toward basic and acidic residues.

The protein localises to the cell membrane. Its function is as follows. Potential calcium-dependent cell-adhesion protein. May be involved in the establishment and maintenance of specific neuronal connections in the brain. In Homo sapiens (Human), this protein is Protocadherin alpha-C2 (PCDHAC2).